The following is a 113-amino-acid chain: UPF0416 protein RF_0879 (113 aa).

It belongs to the UPF0416 family.

The protein is UPF0416 protein RF_0879 of Rickettsia felis (strain ATCC VR-1525 / URRWXCal2) (Rickettsia azadi).